The following is a 440-amino-acid chain: 3-phosphoshikimate 1-carboxyvinyltransferase (440 aa).

3-phosphoshikimate-binding residues include Lys-25, Ser-26, and Arg-30. Residue Lys-25 participates in phosphoenolpyruvate binding. Positions 96 and 124 each coordinate phosphoenolpyruvate. Ser-168, Gln-169, Asp-310, and Lys-337 together coordinate 3-phosphoshikimate. Residue Gln-169 participates in phosphoenolpyruvate binding. Asp-310 acts as the Proton acceptor in catalysis. Phosphoenolpyruvate contacts are provided by Arg-341, Arg-382, and Lys-409.

This sequence belongs to the EPSP synthase family. As to quaternary structure, monomer.

The protein localises to the cytoplasm. It carries out the reaction 3-phosphoshikimate + phosphoenolpyruvate = 5-O-(1-carboxyvinyl)-3-phosphoshikimate + phosphate. The protein operates within metabolic intermediate biosynthesis; chorismate biosynthesis; chorismate from D-erythrose 4-phosphate and phosphoenolpyruvate: step 6/7. In terms of biological role, catalyzes the transfer of the enolpyruvyl moiety of phosphoenolpyruvate (PEP) to the 5-hydroxyl of shikimate-3-phosphate (S3P) to produce enolpyruvyl shikimate-3-phosphate and inorganic phosphate. The protein is 3-phosphoshikimate 1-carboxyvinyltransferase of Chlamydia trachomatis serovar L2 (strain ATCC VR-902B / DSM 19102 / 434/Bu).